The primary structure comprises 331 residues: Nucleotide sugar transporter SLC35B4 (331 aa).

A run of 11 helical transmembrane segments spans residues 4-24 (ALAVGLVFAGCCSNVIFLELL), 30-50 (GCGNIVTFAQFLFIAVEGFLF), 59-79 (PAIPIRYYAIMVTMFFTVSVV), 92-112 (LHMIFRSGSLIANMILGIIIL), 117-137 (SIFKYTSIALVSVGIFICTFM), 153-173 (GFQAFVWWLLGIGALTFALLM), 201-221 (ALPLPGFIFLASDIYDHAVLF), 229-249 (IPGIGVTLPIMWFYLLMNIIT), 251-267 (YVCIRGVFILTTECASL), 268-288 (TVTLVVTLRKFVSLIFSILYF), and 291-311 (PFTLWHWLGTLFVFIGTLMYT). The Mediates endoplasmic reticulum retention signature appears at 326–331 (KDNKKN).

This sequence belongs to the nucleotide-sugar transporter family. SLC35B subfamily.

It localises to the endoplasmic reticulum membrane. The enzyme catalyses UDP-N-acetyl-alpha-D-glucosamine(in) + UDP-alpha-D-glucuronate(out) = UDP-N-acetyl-alpha-D-glucosamine(out) + UDP-alpha-D-glucuronate(in). It carries out the reaction UDP-alpha-D-xylose(in) + UDP-alpha-D-glucuronate(out) = UDP-alpha-D-xylose(out) + UDP-alpha-D-glucuronate(in). Its function is as follows. Antiporter that transports nucleotide sugars across the endoplasmic reticulum (ER) membrane in exchange for another nucleotide sugar. May couple UDP-alpha-D-glucuronate (UDP-GlcA) or UDP-alpha-D-xylose (UDP-Xyl) efflux to UDP-alpha-D-glucuronate (UDP-GlcA) influx into the ER lumen, which in turn stimulates glucuronidation and excretion of endobiotics and xenobiotics. The sequence is that of Nucleotide sugar transporter SLC35B4 (SLC35B4) from Macaca fascicularis (Crab-eating macaque).